We begin with the raw amino-acid sequence, 193 residues long: NADPH:quinone oxidoreductase MdaB (193 aa).

Residues 16–23, 69–72, Tyr-108, and 124–127 contribute to the FAD site; these read SNGQLNDT, GWWM, and TWNA.

It belongs to the oxidoreductase MdaB family. As to quaternary structure, homodimer. The cofactor is FAD.

The protein resides in the cytoplasm. The catalysed reaction is a quinone + NADPH + H(+) = a quinol + NADP(+). In terms of biological role, NADPH-specific quinone reductase. The polypeptide is NADPH:quinone oxidoreductase MdaB (Escherichia coli O157:H7).